A 589-amino-acid polypeptide reads, in one-letter code: ATP-dependent ubiquitin transferase-like protein Cap2 (589 aa).

Residue Cys13 forms a Glycyl cysteine dithioester (Cys-Gly) (interchain with G-Cter in DncV) linkage. Lys77 participates in a covalent cross-link: Glycyl lysine isopeptide (Lys-Gly) (interchain with G-Cter in DncV). The active-site For E2-like domain is the Cys91. Glycyl lysine isopeptide (Lys-Gly) (interchain with G-Cter in DncV) cross-links involve residues Lys305, Lys387, and Lys484. Cys493 participates in a covalent cross-link: Glycyl cysteine dithioester (Cys-Gly) (interchain with G-Cter in DncV). Catalysis depends on for E1-like domain residues Cys493, Cys496, and Cys513. Residue Cys513 forms a Glycyl cysteine dithioester (Cys-Gly) (interchain with G-Cter in DncV) linkage. Residue Lys523 forms a Glycyl lysine isopeptide (Lys-Gly) (interchain with G-Cter in DncV) linkage.

The protein in the C-terminal section; belongs to the HesA/MoeB/ThiF family. As to quaternary structure, a Cap2 dimer is bound on either side by a DncV monomer. Post-translationally, conjugated to DncV via 5 different Lys residues and 3 Cys residues.

In terms of biological role, CD-NTase priming component of a CBASS antiviral system. CBASS (cyclic oligonucleotide-based antiphage signaling system) provides immunity against bacteriophages. The CD-NTase protein (DncV) synthesizes cyclic nucleotides in response to infection; these serve as specific second messenger signals. The signals activate a diverse range of effectors, leading to bacterial cell death and thus abortive phage infection. A type II-A(GA) CBASS system. Functionally, conjugates DncV to itself in vitro and to other cellular proteins in vivo; conjugation requires ATP. This primes DncV, upon phage infection CdnA activates and makes cyclic nucleotides. Its function is as follows. Protects E.coli against phage infection. When capV and dncV are introduced in E.coli MG1655 there is 1000-fold protection against phage P1; protection against other phage (T2, T4, T5, T6 and lambda-vir) requires the 2 subsequent genes. In another paper the capV-dncV-cap2-cap3 operon gives 10(4)-10(5)-fold protection against phages lambda, T2, T4 and T6, about 1000-fold protection against P1 and 10-fold protection against T5. The polypeptide is ATP-dependent ubiquitin transferase-like protein Cap2 (Escherichia coli (strain TW11681)).